The sequence spans 122 residues: Large ribosomal subunit protein bL12 (122 aa).

The protein belongs to the bacterial ribosomal protein bL12 family. In terms of assembly, homodimer. Part of the ribosomal stalk of the 50S ribosomal subunit. Forms a multimeric L10(L12)X complex, where L10 forms an elongated spine to which 2 to 4 L12 dimers bind in a sequential fashion. Binds GTP-bound translation factors.

In terms of biological role, forms part of the ribosomal stalk which helps the ribosome interact with GTP-bound translation factors. Is thus essential for accurate translation. In Pasteurella multocida (strain Pm70), this protein is Large ribosomal subunit protein bL12.